The sequence spans 495 residues: Cobyric acid synthase (495 aa).

The region spanning 252-439 is the GATase cobBQ-type domain; it reads RIRIAAPMLS…VHGLFAQDAF (188 aa). The active-site Nucleophile is C334. H431 is an active-site residue.

The protein belongs to the CobB/CobQ family. CobQ subfamily.

It participates in cofactor biosynthesis; adenosylcobalamin biosynthesis. Catalyzes amidations at positions B, D, E, and G on adenosylcobyrinic A,C-diamide. NH(2) groups are provided by glutamine, and one molecule of ATP is hydrogenolyzed for each amidation. The sequence is that of Cobyric acid synthase from Hyphomonas neptunium (strain ATCC 15444).